The primary structure comprises 152 residues: Transcriptional regulator MraZ (152 aa).

SpoVT-AbrB domains follow at residues 5–52 (ASAI…PIHE) and 81–124 (AHEV…DEQS).

This sequence belongs to the MraZ family. As to quaternary structure, forms oligomers.

The protein localises to the cytoplasm. Its subcellular location is the nucleoid. The protein is Transcriptional regulator MraZ of Shewanella baltica (strain OS155 / ATCC BAA-1091).